Consider the following 170-residue polypeptide: MQIILLQRIVNLGKLGETVDVKPGYGRNFLIPLGKALPATKANIEKFEARRAELEAEEAKEVAVAQERADALTDVNVIMRAKSGDEGKLFGSIGTRDIAEALTNSGLEVDRAEIKLPEGTLRQIGEYNVDIQLHHDVTATILVTILSEDGDNEDLDEDNAADENEDYSEE.

Residues 149–170 (DGDNEDLDEDNAADENEDYSEE) are disordered.

It belongs to the bacterial ribosomal protein bL9 family.

Binds to the 23S rRNA. The chain is Large ribosomal subunit protein bL9 from Psychrobacter cryohalolentis (strain ATCC BAA-1226 / DSM 17306 / VKM B-2378 / K5).